Here is a 516-residue protein sequence, read N- to C-terminus: Prolyl 4-hydroxylase subunit alpha-1 (516 aa).

N97 carries an N-linked (GlcNAc...) asparagine glycan. One copy of the TPR repeat lies at 189–222 (VYILDYLSYAVYQQGDLSKAMMLTKRLLELDPEH). N243 carries an N-linked (GlcNAc...) asparagine glycan. Residues 393 to 501 (TAEELQVANY…KWVSNKWLHE (109 aa)) form the Fe2OG dioxygenase domain. H411, D413, and H482 together coordinate Fe cation. K492 lines the 2-oxoglutarate pocket.

It belongs to the P4HA family. As to quaternary structure, heterotetramer of two alpha chains and two beta chains (the beta chain is the multi-functional PDI). Fe(2+) serves as cofactor. Requires L-ascorbate as cofactor.

It is found in the endoplasmic reticulum lumen. It carries out the reaction L-prolyl-[collagen] + 2-oxoglutarate + O2 = trans-4-hydroxy-L-prolyl-[collagen] + succinate + CO2. Functionally, catalyzes the post-translational formation of 4-hydroxyproline in -Xaa-Pro-Gly- sequences in collagens and other proteins. This Gallus gallus (Chicken) protein is Prolyl 4-hydroxylase subunit alpha-1 (P4HA1).